A 185-amino-acid chain; its full sequence is Ribosome-recycling factor (185 aa).

This sequence belongs to the RRF family.

It localises to the cytoplasm. In terms of biological role, responsible for the release of ribosomes from messenger RNA at the termination of protein biosynthesis. May increase the efficiency of translation by recycling ribosomes from one round of translation to another. The polypeptide is Ribosome-recycling factor (Shewanella sp. (strain MR-4)).